Consider the following 447-residue polypeptide: Clusterin (447 aa).

The N-terminal stretch at 1 to 22 (MKTLLLCVGLLLSWERGQVLGD) is a signal peptide. The Nuclear localization signal motif lies at 77 to 80 (KKNK). N-linked (GlcNAc...) asparagine glycosylation is found at Asn-85 and Asn-102. 5 disulfide bridges follow: Cys-101–Cys-311, Cys-112–Cys-303, Cys-115–Cys-300, Cys-120–Cys-293, and Cys-128–Cys-283. Ser-132 carries the post-translational modification Phosphoserine. Asn-144, Asn-289, Asn-326, Asn-352, and Asn-372 each carry an N-linked (GlcNAc...) asparagine glycan. Ser-394 is subject to Phosphoserine. The short motif at 441-445 (RKKKR) is the Nuclear localization signal element.

This sequence belongs to the clusterin family. In terms of assembly, antiparallel disulfide-linked heterodimer of an alpha chain and a beta chain. Self-associates and forms higher oligomers. Interacts with a broad range of misfolded proteins, including APP, APOC2 and LYZ. Slightly acidic pH promotes interaction with misfolded proteins. Forms high-molecular weight oligomers upon interaction with misfolded proteins. Interacts with APOA1, LRP2, CLUAP1 and PON1. Interacts with the complement membrane attack complex. Interacts (via alpha chain) with XRCC6. Interacts with SYVN1, COMMD1, BTRC, CUL1 and with ubiquitin and SCF (SKP1-CUL1-F-box protein) E3 ubiquitin-protein ligase complexes. Interacts (via alpha chain) with BAX in stressed cells, where BAX undergoes a conformation change leading to association with the mitochondrial membrane. Does not interact with BAX in unstressed cells. Found in a complex with LTF, CLU, EPPIN and SEMG1. Interacts (immaturely glycosylated pre-secreted form) with HSPA5; this interaction promotes CLU stability and facilitates stress-induced CLU retrotranslocation from the secretory pathway to the mitochondria, thereby reducing stress-induced apoptosis by stabilizing mitochondrial membrane integrity. Interacts with BCL2L1; this interaction releases and activates BAX and promotes cell death. Interacts with TGFBR2 and ACVR1. Interacts (secreted form) with STMN3; this interaction may act as an important modulator during neuronal differentiation. Interacts with VLDLR and LRP8. Post-translationally, proteolytically cleaved on its way through the secretory system, probably within the Golgi lumen. Proteolytic cleavage is not necessary for its chaperone activity. All non-secreted forms are not proteolytically cleaved. Chaperone activity of uncleaved forms is dependent on a non-reducing environment. In terms of processing, polyubiquitinated, leading to proteasomal degradation. Under cellular stress, the intracellular level of cleaved form is reduced due to proteasomal degradation. Heavily N-glycosylated. About 30% of the protein mass is comprised of complex N-linked carbohydrate. Endoplasmic reticulum (ER) stress induces changes in glycosylation status and increases level of hypoglycosylated forms. Core carbohydrates are essential for chaperone activity. Non-secreted forms are hypoglycosylated or unglycosylated.

The protein resides in the secreted. It localises to the nucleus. The protein localises to the cytoplasm. Its subcellular location is the mitochondrion membrane. It is found in the cytosol. The protein resides in the microsome. It localises to the endoplasmic reticulum. The protein localises to the mitochondrion. Its subcellular location is the perinuclear region. It is found in the cytoplasmic vesicle. The protein resides in the secretory vesicle. It localises to the chromaffin granule. Functions as extracellular chaperone that prevents aggregation of non native proteins. Prevents stress-induced aggregation of blood plasma proteins. Inhibits formation of amyloid fibrils by APP, APOC2, B2M, CALCA, CSN3, SNCA and aggregation-prone LYZ variants (in vitro). Does not require ATP. Maintains partially unfolded proteins in a state appropriate for subsequent refolding by other chaperones, such as HSPA8/HSC70. Does not refold proteins by itself. Binding to cell surface receptors triggers internalization of the chaperone-client complex and subsequent lysosomal or proteasomal degradation. When secreted, protects cells against apoptosis and against cytolysis by complement: inhibits assembly of the complement membrane attack complex (MAC) by preventing polymerization of C9 pore component of the MAC complex. Intracellular forms interact with ubiquitin and SCF (SKP1-CUL1-F-box protein) E3 ubiquitin-protein ligase complexes and promote the ubiquitination and subsequent proteasomal degradation of target proteins. Promotes proteasomal degradation of COMMD1 and IKBKB. Modulates NF-kappa-B transcriptional activity. Following stress, promotes apoptosis. Inhibits apoptosis when associated with the mitochondrial membrane by interference with BAX-dependent release of cytochrome c into the cytoplasm. Plays a role in the regulation of cell proliferation. An intracellular form suppresses stress-induced apoptosis by stabilizing mitochondrial membrane integrity through interaction with HSPA5. Secreted form does not affect caspase or BAX-mediated intrinsic apoptosis and TNF-induced NF-kappa-B-activity. Secreted form act as an important modulator during neuronal differentiation through interaction with STMN3. Plays a role in the clearance of immune complexes that arise during cell injury. This chain is Clusterin (CLU), found in Oryctolagus cuniculus (Rabbit).